Here is a 360-residue protein sequence, read N- to C-terminus: Peptide chain release factor 1 (360 aa).

The residue at position 235 (Gln235) is an N5-methylglutamine.

This sequence belongs to the prokaryotic/mitochondrial release factor family. Methylated by PrmC. Methylation increases the termination efficiency of RF1.

It localises to the cytoplasm. Peptide chain release factor 1 directs the termination of translation in response to the peptide chain termination codons UAG and UAA. In Burkholderia cenocepacia (strain HI2424), this protein is Peptide chain release factor 1.